We begin with the raw amino-acid sequence, 118 residues long: Large ribosomal subunit protein bL20 (118 aa).

Belongs to the bacterial ribosomal protein bL20 family.

In terms of biological role, binds directly to 23S ribosomal RNA and is necessary for the in vitro assembly process of the 50S ribosomal subunit. It is not involved in the protein synthesizing functions of that subunit. The chain is Large ribosomal subunit protein bL20 from Acidiphilium cryptum (strain JF-5).